Reading from the N-terminus, the 170-residue chain is MAQLRWGRKGVRSQRRKYSRPVAYKPPSSKVVSHVETVLNKKDVTGAEMKPFNDGSRYSMKKIMVSATLTMAPGELLNYLIVKSNSPIANWSSSFSNPSLMVKESVQDTVTILRRGKLESSGTAGKDVTKSFSRFVNLGLGISQTQHLYLIIYSSDAMKITLETRMYIDV.

Basic residues predominate over residues 1–19 (MAQLRWGRKGVRSQRRKYS). The interval 1-25 (MAQLRWGRKGVRSQRRKYSRPVAYK) is disordered.

Belongs to the nanoviridae capsid protein family.

The protein localises to the virion. The sequence is that of Capsid protein (DNA-S) from Subterranean clover stunt virus (strain J) (SCSV).